The primary structure comprises 645 residues: UvrABC system protein B (645 aa).

A Helicase ATP-binding domain is found at 24–414 (AGLNDNKRDQ…LFVEQVIRPT (391 aa)). 37 to 44 (GVTGSGKT) is a binding site for ATP. The Beta-hairpin motif lies at 90 to 113 (YYDYYQPEAYLPQTDTYIEKDSVI). In terms of domain architecture, Helicase C-terminal spans 426–591 (AEAQVYDVVH…VLPKTIIKPI (166 aa)). Residues 610–645 (KDTVSSLRKQMLAHAKNLEFEEAAKIKNIIGRINNL) enclose the UVR domain.

Belongs to the UvrB family. As to quaternary structure, forms a heterotetramer with UvrA during the search for lesions. Interacts with UvrC in an incision complex.

The protein resides in the cytoplasm. In terms of biological role, the UvrABC repair system catalyzes the recognition and processing of DNA lesions. A damage recognition complex composed of 2 UvrA and 2 UvrB subunits scans DNA for abnormalities. Upon binding of the UvrA(2)B(2) complex to a putative damaged site, the DNA wraps around one UvrB monomer. DNA wrap is dependent on ATP binding by UvrB and probably causes local melting of the DNA helix, facilitating insertion of UvrB beta-hairpin between the DNA strands. Then UvrB probes one DNA strand for the presence of a lesion. If a lesion is found the UvrA subunits dissociate and the UvrB-DNA preincision complex is formed. This complex is subsequently bound by UvrC and the second UvrB is released. If no lesion is found, the DNA wraps around the other UvrB subunit that will check the other stand for damage. This is UvrABC system protein B from Wolbachia sp. subsp. Brugia malayi (strain TRS).